The sequence spans 419 residues: L-rhamnose isomerase (419 aa).

Residues His262, Asp294, and Asp296 each coordinate Mn(2+).

It belongs to the rhamnose isomerase family. Homotetramer. The cofactor is Mn(2+).

It is found in the cytoplasm. It catalyses the reaction L-rhamnopyranose = L-rhamnulose. It functions in the pathway carbohydrate degradation; L-rhamnose degradation; glycerone phosphate from L-rhamnose: step 1/3. Catalyzes the interconversion of L-rhamnose and L-rhamnulose. The chain is L-rhamnose isomerase from Klebsiella pneumoniae subsp. pneumoniae (strain ATCC 700721 / MGH 78578).